Here is a 159-residue protein sequence, read N- to C-terminus: Ribosomal RNA large subunit methyltransferase H (159 aa).

Residues Leu-76, Gly-108, and 127-132 contribute to the S-adenosyl-L-methionine site; that span reads FSKMTL.

This sequence belongs to the RNA methyltransferase RlmH family. As to quaternary structure, homodimer.

Its subcellular location is the cytoplasm. The catalysed reaction is pseudouridine(1915) in 23S rRNA + S-adenosyl-L-methionine = N(3)-methylpseudouridine(1915) in 23S rRNA + S-adenosyl-L-homocysteine + H(+). In terms of biological role, specifically methylates the pseudouridine at position 1915 (m3Psi1915) in 23S rRNA. The protein is Ribosomal RNA large subunit methyltransferase H of Bacillus mycoides (strain KBAB4) (Bacillus weihenstephanensis).